The primary structure comprises 415 residues: Putative competence-damage inducible protein (415 aa).

Belongs to the CinA family.

In Listeria welshimeri serovar 6b (strain ATCC 35897 / DSM 20650 / CCUG 15529 / CIP 8149 / NCTC 11857 / SLCC 5334 / V8), this protein is Putative competence-damage inducible protein.